The chain runs to 1071 residues: DNA-directed RNA polymerase subunit beta (1071 aa).

Belongs to the RNA polymerase beta chain family. In plastids the minimal PEP RNA polymerase catalytic core is composed of four subunits: alpha, beta, beta', and beta''. When a (nuclear-encoded) sigma factor is associated with the core the holoenzyme is formed, which can initiate transcription.

The protein resides in the plastid. It is found in the chloroplast. The catalysed reaction is RNA(n) + a ribonucleoside 5'-triphosphate = RNA(n+1) + diphosphate. Its function is as follows. DNA-dependent RNA polymerase catalyzes the transcription of DNA into RNA using the four ribonucleoside triphosphates as substrates. This Adiantum capillus-veneris (Maidenhair fern) protein is DNA-directed RNA polymerase subunit beta.